Consider the following 320-residue polypeptide: tRNA U34 carboxymethyltransferase (320 aa).

Carboxy-S-adenosyl-L-methionine contacts are provided by residues Lys-89, Trp-103, Lys-108, Gly-128, 150–152, 179–180, Met-194, Tyr-198, and Arg-313; these read DPT and IE.

Belongs to the class I-like SAM-binding methyltransferase superfamily. CmoB family. As to quaternary structure, homotetramer.

The enzyme catalyses carboxy-S-adenosyl-L-methionine + 5-hydroxyuridine(34) in tRNA = 5-carboxymethoxyuridine(34) in tRNA + S-adenosyl-L-homocysteine + H(+). Functionally, catalyzes carboxymethyl transfer from carboxy-S-adenosyl-L-methionine (Cx-SAM) to 5-hydroxyuridine (ho5U) to form 5-carboxymethoxyuridine (cmo5U) at position 34 in tRNAs. This is tRNA U34 carboxymethyltransferase from Actinobacillus pleuropneumoniae serotype 3 (strain JL03).